Here is a 496-residue protein sequence, read N- to C-terminus: L-arabinose isomerase (496 aa).

Mn(2+) contacts are provided by glutamate 302, glutamate 329, histidine 346, and histidine 445.

The protein belongs to the arabinose isomerase family. Mn(2+) serves as cofactor.

It catalyses the reaction beta-L-arabinopyranose = L-ribulose. It functions in the pathway carbohydrate degradation; L-arabinose degradation via L-ribulose; D-xylulose 5-phosphate from L-arabinose (bacterial route): step 1/3. Its function is as follows. Catalyzes the conversion of L-arabinose to L-ribulose. The polypeptide is L-arabinose isomerase (Thermotoga sp. (strain RQ2)).